Consider the following 447-residue polypeptide: Phosphoglucosamine mutase (447 aa).

Catalysis depends on serine 102, which acts as the Phosphoserine intermediate. Mg(2+) contacts are provided by serine 102, aspartate 241, aspartate 243, and aspartate 245. The residue at position 102 (serine 102) is a Phosphoserine.

This sequence belongs to the phosphohexose mutase family. Mg(2+) is required as a cofactor. Post-translationally, activated by phosphorylation.

It carries out the reaction alpha-D-glucosamine 1-phosphate = D-glucosamine 6-phosphate. In terms of biological role, catalyzes the conversion of glucosamine-6-phosphate to glucosamine-1-phosphate. This Hamiltonella defensa subsp. Acyrthosiphon pisum (strain 5AT) protein is Phosphoglucosamine mutase.